The primary structure comprises 385 residues: Selenoprotein P (385 aa).

The first 19 residues, 1–19, serve as a signal peptide directing secretion; the sequence is MWRSLGLALALCLLPYGGA. A non-standard amino acid (selenocysteine) is located at residue U59. Residues 59–62 constitute a cross-link (cysteinyl-selenocysteine (Sec-Cys); in isoform Se-P1); it reads UYLC. Residues N83, N174, and N188 are each glycosylated (N-linked (GlcNAc...) asparagine). Disulfide bonds link C168–C186 and C172–C175. The tract at residues 196-262 is disordered; it reads KTTEPSEEHN…KGQHRQGHLE (67 aa). Over residues 243 to 258 the composition is skewed to basic residues; that stretch reads LHHHHHHHKHKGQHRQ. Position 264 (U264) is a non-standard amino acid, selenocysteine. S269 carries the post-translational modification Phosphoserine. 4 non-standard amino acids (selenocysteine) are found at residues U282, U323, U335, and U357. The disordered stretch occupies residues 357–385; it reads UHSQHVSPTEASPNUSUNNKTKKUKUNLN. Residues 360–369 are compositionally biased toward polar residues; it reads QHVSPTEASP. T365 is a glycosylation site (O-linked (Hex...) threonine; partial). Non-standard amino acids (selenocysteine) are located at U371, U373, U380, and U382. Residues 376–385 show a composition bias toward basic residues; sequence KTKKUKUNLN.

This sequence belongs to the selenoprotein P family. In terms of processing, isoform Se-P1 contains several disulfide bridges and a selenide-sulfide bond between Sec-59 and Cys-62. These bonds are speculated to serve as redox-active pairs. Post-translationally, phosphorylation sites are present in the extracellular medium. Widely expressed, mainly by the liver. Secreted in plasma.

The protein resides in the secreted. Functionally, might be responsible for some of the extracellular antioxidant defense properties of selenium or might be involved in the transport of selenium. May supply selenium to tissues such as brain and testis. This chain is Selenoprotein P, found in Rattus norvegicus (Rat).